The following is an 82-amino-acid chain: Acyl carrier protein (82 aa).

One can recognise a Carrier domain in the interval 4-79; it reads PEMEARLKQI…DALNYIEQKL (76 aa). The residue at position 39 (S39) is an O-(pantetheine 4'-phosphoryl)serine.

It belongs to the acyl carrier protein (ACP) family. Post-translationally, 4'-phosphopantetheine is transferred from CoA to a specific serine of apo-ACP by AcpS. This modification is essential for activity because fatty acids are bound in thioester linkage to the sulfhydryl of the prosthetic group.

It is found in the cytoplasm. It participates in lipid metabolism; fatty acid biosynthesis. Functionally, carrier of the growing fatty acid chain in fatty acid biosynthesis. This is Acyl carrier protein from Roseiflexus castenholzii (strain DSM 13941 / HLO8).